The following is a 390-amino-acid chain: Lipoyl synthase, mitochondrial (390 aa).

The N-terminal 18 residues, 1–18, are a transit peptide targeting the mitochondrion; the sequence is MALYRAPKLQRSLLNRCL. 7 residues coordinate [4Fe-4S] cluster: Cys-99, Cys-104, Cys-110, Cys-137, Cys-141, Cys-144, and Ser-351. The Radical SAM core domain maps to 120–340; it reads AEGRSAATAT…KQVAEDLGFL (221 aa).

The protein belongs to the radical SAM superfamily. Lipoyl synthase family. Requires [4Fe-4S] cluster as cofactor.

It is found in the mitochondrion. The catalysed reaction is [[Fe-S] cluster scaffold protein carrying a second [4Fe-4S](2+) cluster] + N(6)-octanoyl-L-lysyl-[protein] + 2 oxidized [2Fe-2S]-[ferredoxin] + 2 S-adenosyl-L-methionine + 4 H(+) = [[Fe-S] cluster scaffold protein] + N(6)-[(R)-dihydrolipoyl]-L-lysyl-[protein] + 4 Fe(3+) + 2 hydrogen sulfide + 2 5'-deoxyadenosine + 2 L-methionine + 2 reduced [2Fe-2S]-[ferredoxin]. Its pathway is protein modification; protein lipoylation via endogenous pathway; protein N(6)-(lipoyl)lysine from octanoyl-[acyl-carrier-protein]: step 2/2. In terms of biological role, catalyzes the radical-mediated insertion of two sulfur atoms into the C-6 and C-8 positions of the octanoyl moiety bound to the lipoyl domains of lipoate-dependent enzymes, thereby converting the octanoylated domains into lipoylated derivatives. This is Lipoyl synthase, mitochondrial from Coprinopsis cinerea (strain Okayama-7 / 130 / ATCC MYA-4618 / FGSC 9003) (Inky cap fungus).